Here is a 353-residue protein sequence, read N- to C-terminus: rRNA methyltransferase 1, mitochondrial (353 aa).

The transit peptide at 1 to 20 (MALLSTVRGATWGRLVTRHF) directs the protein to the mitochondrion. Residues 311 to 353 (PTEGERRQLLQDPQEPSARSEGLSMAQHPGLSSGPEKERQNEG) are disordered.

This sequence belongs to the class IV-like SAM-binding methyltransferase superfamily. RNA methyltransferase TrmH family.

It is found in the mitochondrion matrix. It catalyses the reaction guanosine(1145) in 16S rRNA + S-adenosyl-L-methionine = 2'-O-methylguanosine(1145) in 16S rRNA + S-adenosyl-L-homocysteine + H(+). In terms of biological role, S-adenosyl-L-methionine-dependent 2'-O-ribose methyltransferase that catalyzes the formation of 2'-O-methylguanosine at position 1145 (Gm1145) in the 16S mitochondrial large subunit ribosomal RNA (mtLSU rRNA), a universally conserved modification in the peptidyl transferase domain of the mtLSU rRNA. This is rRNA methyltransferase 1, mitochondrial from Homo sapiens (Human).